Reading from the N-terminus, the 276-residue chain is Large ribosomal subunit protein uL2 (276 aa).

Disordered regions lie at residues L34 to G55 and R221 to K276. Residues L37–R48 show a composition bias toward polar residues.

Belongs to the universal ribosomal protein uL2 family. As to quaternary structure, part of the 50S ribosomal subunit. Forms a bridge to the 30S subunit in the 70S ribosome.

In terms of biological role, one of the primary rRNA binding proteins. Required for association of the 30S and 50S subunits to form the 70S ribosome, for tRNA binding and peptide bond formation. It has been suggested to have peptidyltransferase activity; this is somewhat controversial. Makes several contacts with the 16S rRNA in the 70S ribosome. The protein is Large ribosomal subunit protein uL2 of Enterococcus faecalis (strain ATCC 700802 / V583).